We begin with the raw amino-acid sequence, 239 residues long: Ribonuclease 3 (239 aa).

Residues 12–137 (RAKLEGLIGH…LIAAIYLDGG (126 aa)) form the RNase III domain. E50 is a Mg(2+) binding site. The active site involves D54. D123 and E126 together coordinate Mg(2+). E126 is an active-site residue. In terms of domain architecture, DRBM spans 162–231 (DAKTELQEWS…ATKMLEREGI (70 aa)).

This sequence belongs to the ribonuclease III family. In terms of assembly, homodimer. Mg(2+) serves as cofactor.

Its subcellular location is the cytoplasm. It catalyses the reaction Endonucleolytic cleavage to 5'-phosphomonoester.. Functionally, digests double-stranded RNA. Involved in the processing of primary rRNA transcript to yield the immediate precursors to the large and small rRNAs (23S and 16S). Processes some mRNAs, and tRNAs when they are encoded in the rRNA operon. Processes pre-crRNA and tracrRNA of type II CRISPR loci if present in the organism. The polypeptide is Ribonuclease 3 (Rhizobium leguminosarum bv. trifolii (strain WSM2304)).